Here is a 334-residue protein sequence, read N- to C-terminus: Leucine-rich repeat-containing protein 39 (334 aa).

Positions 10–47 (AVNAVKEVWEKRIKKLNEDLKREKEFQQKLVRIWEERV) form a coiled coil. LRR repeat units follow at residues 84–105 (QLQEWQLHRIGLLKIPEFIGRF), 107–128 (NLIVLDLSRNTITEIPRGIGLL), 130–151 (RLQELILSYNRIKTVPMELSYC), 153–176 (SLEKLELAVNRDISDLPQELSNLL), 177–198 (KLTHLDLSMNLFTTIPPAVLNM), 200–221 (ALEWLDMGSNRLEQLPDTIERM), 223–244 (NLHTLWLQRNEITCLPETISSM), 246–267 (NLSTLVLSNNKLQDIPVCMEKM), and 269–290 (NLRFVNFRDNPLKLEVTLPPSE).

In terms of assembly, interacts with MYH7 (via C-terminus).

It is found in the cytoplasm. It localises to the myofibril. The protein resides in the sarcomere. Its subcellular location is the m line. Its function is as follows. Component of the sarcomeric M-band which plays a role in myocyte response to biomechanical stress. May regulate expression of other M-band proteins via an SRF-dependent pathway. Important for normal contractile function in heart. The sequence is that of Leucine-rich repeat-containing protein 39 from Bos taurus (Bovine).